Here is an 855-residue protein sequence, read N- to C-terminus: Inactive rhomboid protein 1 (855 aa).

The segment at 1–36 is disordered; sequence MSEARRDSTSSLQRKKPPWLKLDIPSAAPPAAEEPS. The Cytoplasmic segment spans residues 1 to 411; that stretch reads MSEARRDSTS…HRPFFTYWLT (411 aa). Low complexity predominate over residues 25–36; it reads PSAAPPAAEEPS. Residues serine 76 and serine 176 each carry the phosphoserine modification. Residues threonine 180 and threonine 183 each carry the phosphothreonine modification. Serine 390 bears the Phosphoserine mark. A helical membrane pass occupies residues 412–432; it reads FVHSLVTVLAVCIYGIAPVGF. Residues 433 to 655 are Lumenal-facing; the sequence is SQHETVDSVL…NPEVPDQFYR (223 aa). Asparagine 583 is a glycosylation site (N-linked (GlcNAc...) asparagine). A helical membrane pass occupies residues 656-676; it reads LWLSLFLHAGILHCLVSICFQ. The Cytoplasmic portion of the chain corresponds to 677–691; the sequence is MTVLRDLEKLAGWHR. A helical transmembrane segment spans residues 692–712; that stretch reads IAIIYLLSGVTGNLASAIFLP. The Lumenal segment spans residues 713–714; the sequence is YR. A helical transmembrane segment spans residues 715-735; sequence AEVGPAGSQFGILACLFVELF. Over 736 to 746 the chain is Cytoplasmic; that stretch reads QSWQILARPWR. Residues 747–767 traverse the membrane as a helical segment; sequence AFFKLLAVVLFLFTFGLLPWI. Topologically, residues 768–772 are lumenal; the sequence is DNFAH. Residues 773–793 form a helical membrane-spanning segment; the sequence is ISGFISGLFLSFAFLPYISFG. Residues 794 to 803 lie on the Cytoplasmic side of the membrane; that stretch reads KFDLYRKRCQ. Residues 804–824 form a helical membrane-spanning segment; it reads IIVFQVVFLGLLAGLVVLFYF. At 825–855 the chain is on the lumenal side; sequence YPVRCEWCEFLTCIPFTDKFCEKYELDAQLH.

Belongs to the peptidase S54 family. Homodimer, or homooligomer. Interacts with TGFA and HBEGF. Interacts with EGF; may retain EGF in the endoplasmic reticulum and regulates its degradation through the endoplasmic reticulum-associated degradation (ERAD). Interacts (via cytoplasmic N-terminus) with FRMD8/iTAP; this interaction leads to mutual protein stabilization. Interacts with ADAM17/TACE.

Its subcellular location is the endoplasmic reticulum membrane. It localises to the golgi apparatus membrane. Functionally, regulates ADAM17 protease, a sheddase of the epidermal growth factor (EGF) receptor ligands and TNF, thereby plays a role in sleep, cell survival, proliferation, migration and inflammation. Does not exhibit any protease activity on its own. The chain is Inactive rhomboid protein 1 (RHBDF1) from Plecturocebus moloch (Dusky titi monkey).